A 537-amino-acid polypeptide reads, in one-letter code: Cytochrome P450 monooxygenase alt2 (537 aa).

A helical transmembrane segment spans residues histidine 4–isoleucine 24. Cysteine 474 serves as a coordination point for heme.

This sequence belongs to the cytochrome P450 family. The cofactor is heme.

It is found in the membrane. Its pathway is secondary metabolite biosynthesis. Its function is as follows. Cytochrome P450 monooxygenase; part of the gene cluster that mediates the biosynthesis of alternapyrone derivatives. Alternapyrone is a decaketide with octa-methylation from methionine on every C2 unit except the third unit. All the domains in the polyketide synthase alt5 are apparently involved in alternapyrone synthesis, that is, the 8 CMeT, 7 KR, 7 DH, and 4 ER reactions in the 9 KS-mediated condensation steps required for alternapyrone synthesis. the alternapyrone produced by alt5 might be intensively modified by cytochrome P450 monooxygenases alt1, alt2 and alt3 and FAD-dependent oxidoreductase alt4 present in the alt gene cluster. This chain is Cytochrome P450 monooxygenase alt2, found in Alternaria solani.